The sequence spans 542 residues: Chaperonin GroEL (542 aa).

ATP contacts are provided by residues 29–32 (TLGP), 86–90 (DGTTT), glycine 413, 477–479 (NAA), and aspartate 493.

Belongs to the chaperonin (HSP60) family. In terms of assembly, forms a cylinder of 14 subunits composed of two heptameric rings stacked back-to-back. Interacts with the co-chaperonin GroES.

It is found in the cytoplasm. The catalysed reaction is ATP + H2O + a folded polypeptide = ADP + phosphate + an unfolded polypeptide.. Together with its co-chaperonin GroES, plays an essential role in assisting protein folding. The GroEL-GroES system forms a nano-cage that allows encapsulation of the non-native substrate proteins and provides a physical environment optimized to promote and accelerate protein folding. The sequence is that of Chaperonin GroEL from Heliobacterium modesticaldum (strain ATCC 51547 / Ice1).